The chain runs to 156 residues: Cyanate hydratase (156 aa).

Catalysis depends on residues R96, E99, and S122.

Belongs to the cyanase family.

The catalysed reaction is cyanate + hydrogencarbonate + 3 H(+) = NH4(+) + 2 CO2. Catalyzes the reaction of cyanate with bicarbonate to produce ammonia and carbon dioxide. This Escherichia coli (strain K12 / DH10B) protein is Cyanate hydratase.